The chain runs to 717 residues: Serine/threonine-protein kinase STE11 (717 aa).

An SAM domain is found at 20–84 (NDLPFVQLFL…LRKSKSFQRD (65 aa)). S323 bears the Phosphoserine mark. Positions 415-712 (WLKGACIGSG…ALELLQHPWL (298 aa)) constitute a Protein kinase domain. ATP is bound by residues 421–429 (IGSGSFGSV) and K444. A compositionally biased stretch (polar residues) spans 452–466 (NIGVPTDNNKQANSD). The tract at residues 452–481 (NIGVPTDNNKQANSDENNEQEEQQEKIEDV) is disordered. Position 465 is a phosphoserine (S465). Residue D579 is the Proton acceptor of the active site.

The protein belongs to the protein kinase superfamily. STE Ser/Thr protein kinase family. MAP kinase kinase kinase subfamily. As to quaternary structure, homodimer. Interacts (via SAM domain) with STE50 (via SAM domain). Interacts with PBS2 and SHO1.

The enzyme catalyses L-seryl-[protein] + ATP = O-phospho-L-seryl-[protein] + ADP + H(+). It catalyses the reaction L-threonyl-[protein] + ATP = O-phospho-L-threonyl-[protein] + ADP + H(+). Functionally, serine/threonine protein kinase required for cell-type-specific transcription and signal transduction in yeast. It is thought that it phosphorylates the STE7 protein kinase which itself, phosphorylates the FUS3 and or KSS1 kinases. This is Serine/threonine-protein kinase STE11 (STE11) from Saccharomyces cerevisiae (strain ATCC 204508 / S288c) (Baker's yeast).